The following is a 150-amino-acid chain: MATVYDVPGDLLVERVAQRLKEIPEIKPPEWAPFVKTGRHKERLPEQEDWWYYRVASILRRVYLDGPVGIERLRTYYGGRKNRGHAPERFYKAGGSIIRKALQQLEAAGFVEKVPGKGRVITPKGRSFLDKIATELKKELEEIIPELKKY.

Belongs to the eukaryotic ribosomal protein eS19 family. As to quaternary structure, part of the 30S ribosomal subunit.

Functionally, may be involved in maturation of the 30S ribosomal subunit. In Pyrococcus abyssi (strain GE5 / Orsay), this protein is Small ribosomal subunit protein eS19 (rps19e).